Here is a 256-residue protein sequence, read N- to C-terminus: Acidic leucine-rich nuclear phosphoprotein 32 family member E (256 aa).

LRR repeat units lie at residues 43–64 (ELEFLSMANVQLTSLAKLPTLS), 65–87 (KLRKLELSDNIISGGLEVLAERC), and 89–110 (NLTYLNLSGNKIKDLGTVEALQ). The LRRCT domain occupies 123-161 (CEITNLEDYRDSIFDLLQQITYLDGFDQEDNEAPDSEDD). A disordered region spans residues 147 to 256 (GFDQEDNEAP…PEDEGEEEDD (110 aa)). Acidic residues-rich tracts occupy residues 148 to 205 (FDQE…EEEV) and 215 to 235 (IQDEDDDDDYVEEGGDEEEEA). Residues 204–256 (EVGLSYLMKEEIQDEDDDDDYVEEGGDEEEEAEGIRGEKRKRDPEDEGEEEDD) are ZID domain. Over residues 236–247 (EGIRGEKRKRDP) the composition is skewed to basic and acidic residues.

This sequence belongs to the ANP32 family. As to quaternary structure, component of a SWR1-like complex. Interacts with H2A.Z/H2AZ1.

It localises to the cytoplasm. The protein localises to the nucleus. In terms of biological role, histone chaperone that specifically mediates the genome-wide removal of histone H2A.Z/H2AZ1 from the nucleosome: removes H2A.Z/H2AZ1 from its normal sites of deposition, especially from enhancer and insulator regions. Not involved in deposition of H2A.Z/H2AZ1 in the nucleosome. May stabilize the evicted H2A.Z/H2AZ1-H2B dimer, thus shifting the equilibrium towards dissociation and the off-chromatin state. Inhibits activity of protein phosphatase 2A (PP2A). Does not inhibit protein phosphatase 1. May play a role in cerebellar development and synaptogenesis. In Gallus gallus (Chicken), this protein is Acidic leucine-rich nuclear phosphoprotein 32 family member E (ANP32E).